A 245-amino-acid chain; its full sequence is Eukaryotic translation initiation factor 6 (245 aa).

The protein belongs to the eIF-6 family. In terms of assembly, monomer. Associates with the 60S ribosomal subunit.

The protein localises to the cytoplasm. Its subcellular location is the nucleus. It localises to the nucleolus. Its function is as follows. Binds to the 60S ribosomal subunit and prevents its association with the 40S ribosomal subunit to form the 80S initiation complex in the cytoplasm. May also be involved in ribosome biogenesis. In Xenopus laevis (African clawed frog), this protein is Eukaryotic translation initiation factor 6 (eif6).